The following is a 367-amino-acid chain: Pyrimidine monooxygenase RutA (367 aa).

Residues 49-50 (IK), N115, E124, 140-141 (RY), and S190 contribute to the FMN site.

Belongs to the NtaA/SnaA/DszA monooxygenase family. RutA subfamily.

The enzyme catalyses uracil + FMNH2 + NADH + O2 = (Z)-3-ureidoacrylate + FMN + NAD(+) + H2O + H(+). It catalyses the reaction thymine + FMNH2 + NADH + O2 = (Z)-2-methylureidoacrylate + FMN + NAD(+) + H2O + H(+). Catalyzes the pyrimidine ring opening between N-3 and C-4 by an unusual flavin hydroperoxide-catalyzed mechanism, adding oxygen atoms in the process to yield ureidoacrylate peracid, that immediately reacts with FMN forming ureidoacrylate and FMN-N(5)-oxide. The FMN-N(5)-oxide reacts spontaneously with NADH to produce FMN. Requires the flavin reductase RutF to regenerate FMN in vivo. The protein is Pyrimidine monooxygenase RutA of Yersinia enterocolitica serotype O:8 / biotype 1B (strain NCTC 13174 / 8081).